A 268-amino-acid polypeptide reads, in one-letter code: Energy-coupling factor transporter transmembrane protein EcfT (268 aa).

5 helical membrane-spanning segments follow: residues 29–49 (VFIFLVFMFMTRDPLLLTVAV), 75–95 (IIIVLTFVLHLFMTGGGEVIV), 107–127 (LIEGFMLAMKLAMIITIASLL), 152–172 (LPTHELALMMSIALRFIPTLI), and 242–262 (WGLKDSVVLAVFLLFAAAVMA).

This sequence belongs to the energy-coupling factor EcfT family. In terms of assembly, forms a stable energy-coupling factor (ECF) transporter complex composed of 2 membrane-embedded substrate-binding proteins (S component), 2 ATP-binding proteins (A component) and 2 transmembrane proteins (T component). May be able to interact with more than 1 S component at a time.

It localises to the cell membrane. Its function is as follows. Transmembrane (T) component of an energy-coupling factor (ECF) ABC-transporter complex. Unlike classic ABC transporters this ECF transporter provides the energy necessary to transport a number of different substrates. This is Energy-coupling factor transporter transmembrane protein EcfT from Bacillus selenitireducens (strain ATCC 700615 / DSM 15326 / MLS10).